A 342-amino-acid chain; its full sequence is tRNA dimethylallyltransferase (342 aa).

Positions 1 to 30 (MSANGPAAEPADGGRAVPAGGGEAVPAGGG) are disordered. Residues 19–30 (AGGGEAVPAGGG) show a composition bias toward gly residues. ATP is bound at residue 49–56 (GPTAAGKS). 51–56 (TAAGKS) contributes to the substrate binding site. Residues 74–77 (DSMQ) are interaction with substrate tRNA.

It belongs to the IPP transferase family. Monomer. Mg(2+) serves as cofactor.

It carries out the reaction adenosine(37) in tRNA + dimethylallyl diphosphate = N(6)-dimethylallyladenosine(37) in tRNA + diphosphate. Catalyzes the transfer of a dimethylallyl group onto the adenine at position 37 in tRNAs that read codons beginning with uridine, leading to the formation of N6-(dimethylallyl)adenosine (i(6)A). This is tRNA dimethylallyltransferase from Salinispora arenicola (strain CNS-205).